A 131-amino-acid chain; its full sequence is Small ribosomal subunit protein bS6 (131 aa).

A disordered region spans residues 96-131 (ITEASPMAKAKDERDSRRGPAGDRSYDEANAEEIAE). Residues 104-122 (KAKDERDSRRGPAGDRSYD) show a composition bias toward basic and acidic residues.

The protein belongs to the bacterial ribosomal protein bS6 family.

In terms of biological role, binds together with bS18 to 16S ribosomal RNA. This Shewanella oneidensis (strain ATCC 700550 / JCM 31522 / CIP 106686 / LMG 19005 / NCIMB 14063 / MR-1) protein is Small ribosomal subunit protein bS6.